Reading from the N-terminus, the 238-residue chain is 2-C-methyl-D-erythritol 4-phosphate cytidylyltransferase (238 aa).

It belongs to the IspD/TarI cytidylyltransferase family. IspD subfamily.

It carries out the reaction 2-C-methyl-D-erythritol 4-phosphate + CTP + H(+) = 4-CDP-2-C-methyl-D-erythritol + diphosphate. It participates in isoprenoid biosynthesis; isopentenyl diphosphate biosynthesis via DXP pathway; isopentenyl diphosphate from 1-deoxy-D-xylulose 5-phosphate: step 2/6. Catalyzes the formation of 4-diphosphocytidyl-2-C-methyl-D-erythritol from CTP and 2-C-methyl-D-erythritol 4-phosphate (MEP). This is 2-C-methyl-D-erythritol 4-phosphate cytidylyltransferase from Acinetobacter baumannii (strain AYE).